The primary structure comprises 436 residues: 3-ketoacyl-CoA thiolase (436 aa).

Cys-99 serves as the catalytic Acyl-thioester intermediate. Active-site proton acceptor residues include His-392 and Cys-422.

It belongs to the thiolase-like superfamily. Thiolase family. As to quaternary structure, heterotetramer of two alpha chains (FadJ) and two beta chains (FadI).

The protein localises to the cytoplasm. It carries out the reaction an acyl-CoA + acetyl-CoA = a 3-oxoacyl-CoA + CoA. The protein operates within lipid metabolism; fatty acid beta-oxidation. Functionally, catalyzes the final step of fatty acid oxidation in which acetyl-CoA is released and the CoA ester of a fatty acid two carbons shorter is formed. The chain is 3-ketoacyl-CoA thiolase from Escherichia coli O9:H4 (strain HS).